The chain runs to 226 residues: Ribose-5-phosphate isomerase A (226 aa).

Substrate-binding positions include 26 to 29 (TGST), 82 to 85 (DGAD), and 95 to 98 (KGGG). E104 serves as the catalytic Proton acceptor. K122 lines the substrate pocket.

It belongs to the ribose 5-phosphate isomerase family. As to quaternary structure, homodimer.

The enzyme catalyses aldehydo-D-ribose 5-phosphate = D-ribulose 5-phosphate. It functions in the pathway carbohydrate degradation; pentose phosphate pathway; D-ribose 5-phosphate from D-ribulose 5-phosphate (non-oxidative stage): step 1/1. Catalyzes the reversible conversion of ribose-5-phosphate to ribulose 5-phosphate. In Streptococcus thermophilus (strain CNRZ 1066), this protein is Ribose-5-phosphate isomerase A.